A 274-amino-acid chain; its full sequence is 2-dehydro-3-deoxyphosphooctonate aldolase (274 aa).

The protein belongs to the KdsA family.

Its subcellular location is the cytoplasm. It carries out the reaction D-arabinose 5-phosphate + phosphoenolpyruvate + H2O = 3-deoxy-alpha-D-manno-2-octulosonate-8-phosphate + phosphate. The protein operates within carbohydrate biosynthesis; 3-deoxy-D-manno-octulosonate biosynthesis; 3-deoxy-D-manno-octulosonate from D-ribulose 5-phosphate: step 2/3. It participates in bacterial outer membrane biogenesis; lipopolysaccharide biosynthesis. The protein is 2-dehydro-3-deoxyphosphooctonate aldolase of Rickettsia canadensis (strain McKiel).